Consider the following 576-residue polypeptide: Arginine--tRNA ligase (576 aa).

Residues 126 to 136 (ANPTGPMHIGH) carry the 'HIGH' region motif.

It belongs to the class-I aminoacyl-tRNA synthetase family. As to quaternary structure, monomer.

It localises to the cytoplasm. The catalysed reaction is tRNA(Arg) + L-arginine + ATP = L-arginyl-tRNA(Arg) + AMP + diphosphate. The polypeptide is Arginine--tRNA ligase (Rickettsia akari (strain Hartford)).